The primary structure comprises 283 residues: Elongation factor Ts (283 aa).

The interval 79-82 (TDFV) is involved in Mg(2+) ion dislocation from EF-Tu.

Belongs to the EF-Ts family.

Its subcellular location is the cytoplasm. Functionally, associates with the EF-Tu.GDP complex and induces the exchange of GDP to GTP. It remains bound to the aminoacyl-tRNA.EF-Tu.GTP complex up to the GTP hydrolysis stage on the ribosome. The polypeptide is Elongation factor Ts (Shewanella sp. (strain ANA-3)).